A 216-amino-acid chain; its full sequence is ATP-dependent Clp protease proteolytic subunit (216 aa).

Ser-101 acts as the Nucleophile in catalysis. Residue His-126 is part of the active site.

Belongs to the peptidase S14 family. As to quaternary structure, component of the chloroplastic Clp protease core complex.

Its subcellular location is the plastid. It localises to the chloroplast stroma. The catalysed reaction is Hydrolysis of proteins to small peptides in the presence of ATP and magnesium. alpha-casein is the usual test substrate. In the absence of ATP, only oligopeptides shorter than five residues are hydrolyzed (such as succinyl-Leu-Tyr-|-NHMec, and Leu-Tyr-Leu-|-Tyr-Trp, in which cleavage of the -Tyr-|-Leu- and -Tyr-|-Trp bonds also occurs).. In terms of biological role, cleaves peptides in various proteins in a process that requires ATP hydrolysis. Has a chymotrypsin-like activity. Plays a major role in the degradation of misfolded proteins. The polypeptide is ATP-dependent Clp protease proteolytic subunit (Hordeum vulgare (Barley)).